Here is a 140-residue protein sequence, read N- to C-terminus: Ribosome maturation factor RimP (140 aa).

This sequence belongs to the RimP family.

It localises to the cytoplasm. Required for maturation of 30S ribosomal subunits. The polypeptide is Ribosome maturation factor RimP (Campylobacter hominis (strain ATCC BAA-381 / DSM 21671 / CCUG 45161 / LMG 19568 / NCTC 13146 / CH001A)).